The primary structure comprises 122 residues: Large ribosomal subunit protein uL14 (122 aa).

The protein belongs to the universal ribosomal protein uL14 family. Part of the 50S ribosomal subunit. Forms a cluster with proteins L3 and L19. In the 70S ribosome, L14 and L19 interact and together make contacts with the 16S rRNA in bridges B5 and B8.

Functionally, binds to 23S rRNA. Forms part of two intersubunit bridges in the 70S ribosome. The protein is Large ribosomal subunit protein uL14 of Thermodesulfovibrio yellowstonii (strain ATCC 51303 / DSM 11347 / YP87).